Here is a 220-residue protein sequence, read N- to C-terminus: VQ motif-containing protein 5 (220 aa).

A VQ motif is present at residues 49-57 (FKSLVQQLT). 2 disordered regions span residues 61 to 80 (PCDR…PEPI) and 131 to 171 (HMMA…GASS). 2 stretches are compositionally biased toward polar residues: residues 133-150 (MAQS…QSNG) and 157-171 (SWFN…GASS).

The protein localises to the nucleus. May function as negative regulator of plant defense. The chain is VQ motif-containing protein 5 from Arabidopsis thaliana (Mouse-ear cress).